A 398-amino-acid polypeptide reads, in one-letter code: Phosphoglycerate kinase (398 aa).

Substrate-binding positions include 21–23, Arg-36, 59–62, Arg-119, and Arg-157; these read DFN and HLGR. Residues Lys-208, Gly-296, Glu-327, and 354-357 contribute to the ATP site; that span reads GGDS.

The protein belongs to the phosphoglycerate kinase family. As to quaternary structure, monomer.

The protein localises to the cytoplasm. It carries out the reaction (2R)-3-phosphoglycerate + ATP = (2R)-3-phospho-glyceroyl phosphate + ADP. The protein operates within carbohydrate degradation; glycolysis; pyruvate from D-glyceraldehyde 3-phosphate: step 2/5. This Streptococcus agalactiae serotype III (strain NEM316) protein is Phosphoglycerate kinase.